A 345-amino-acid polypeptide reads, in one-letter code: Phenylalanine--tRNA ligase alpha subunit (345 aa).

E259 contributes to the Mg(2+) binding site.

The protein belongs to the class-II aminoacyl-tRNA synthetase family. Phe-tRNA synthetase alpha subunit type 1 subfamily. As to quaternary structure, tetramer of two alpha and two beta subunits. Mg(2+) is required as a cofactor.

The protein resides in the cytoplasm. The enzyme catalyses tRNA(Phe) + L-phenylalanine + ATP = L-phenylalanyl-tRNA(Phe) + AMP + diphosphate + H(+). In Lactococcus lactis subsp. cremoris (strain SK11), this protein is Phenylalanine--tRNA ligase alpha subunit.